The following is a 2201-amino-acid chain: RNA-directed RNA polymerase L (2201 aa).

The tract at residues 26–285 (KNIMLAQTQI…VCSKSVEYTF (260 aa)) is endonuclease. 3 residues coordinate Mn(2+): E51, D88, and E101. Residue K114 is part of the active site. The 197-residue stretch at 1156-1352 (LDMKSVVRQS…FLSDRLNKFV (197 aa)) folds into the RdRp catalytic domain. D1312 contributes to the Mg(2+) binding site.

It belongs to the Bunyavirales RNA polymerase family. In terms of assembly, homomultimer; the oligomeric structure is essential for the polymerase activity. Interacts with nucleoprotein N. Interacts with protein Z; this interaction inhibits viral transcription and replication, Z partially blocks the product exit tunnel for the releasing nascent RNA product. It depends on Mn(2+) as a cofactor. Mg(2+) is required as a cofactor.

It is found in the virion. It localises to the host cytoplasm. The catalysed reaction is RNA(n) + a ribonucleoside 5'-triphosphate = RNA(n+1) + diphosphate. In terms of biological role, RNA-dependent RNA polymerase, which is responsible for the replication and transcription of the viral RNA genome using antigenomic RNA as an intermediate. During transcription, synthesizes subgenomic RNAs and assures their capping by a cap-snatching mechanism, which involves the endonuclease activity cleaving the host capped pre-mRNAs. These short capped RNAs are then used as primers for viral transcription. The 3'-end of subgenomic mRNAs molecules are heterogeneous and not polyadenylated. The replicase function is to direct synthesis of antigenomic and genomic RNA which are encapsidated and non capped. As a consequence of the use of the same enzyme for both transcription and replication, these mechanisms need to be well coordinated. These processes may be regulated by proteins N and Z in a dose-dependent manner. Z protein inhibits the viral polymerase L und thus the viral transcription and RNA synthesis. In Oecomys bicolor (Bicolored arboreal rice rat), this protein is RNA-directed RNA polymerase L.